Consider the following 72-residue polypeptide: Prokaryotic ubiquitin-like protein Pup (72 aa).

The span at 1 to 10 (MATRDSGGGQ) shows a compositional bias: gly residues. A disordered region spans residues 1 to 41 (MATRDSGGGQQHTNRHADEVEEVAAEGNDASDLKERHEKLS). Residues 21–61 (EEVAAEGNDASDLKERHEKLSEDVDSLLDEIDDVLEENAEE) are a coiled coil. The segment at 28 to 66 (NDASDLKERHEKLSEDVDSLLDEIDDVLEENAEEFVKGY) is ARC ATPase binding. Residues 31-41 (SDLKERHEKLS) show a composition bias toward basic and acidic residues. Glu-72 participates in a covalent cross-link: Isoglutamyl lysine isopeptide (Glu-Lys) (interchain with K-? in acceptor proteins).

It belongs to the prokaryotic ubiquitin-like protein family. In terms of assembly, strongly interacts with the proteasome-associated ATPase ARC through a hydrophobic interface; the interacting region of Pup lies in its C-terminal half. There is one Pup binding site per ARC hexamer ring.

The protein operates within protein degradation; proteasomal Pup-dependent pathway. Its function is as follows. Protein modifier that is covalently attached to lysine residues of substrate proteins, thereby targeting them for proteasomal degradation. The tagging system is termed pupylation. In Frankia alni (strain DSM 45986 / CECT 9034 / ACN14a), this protein is Prokaryotic ubiquitin-like protein Pup.